The primary structure comprises 594 residues: MFALSKVLRRSQSLRLGACNAVYSKLDIPLGERNIAIESNALIHDKHEALPRFYELSWSSSTGRRSLSSDAGAKTTGDDDDLEDKNVDLATPDETSSDSEDGEEFSGDEGDIEGAELELHVPESKRPSEMFKAIVSVSGLSVGSALDKWVEQGKDTNRKEFESAMLQLRKRRMFGRALQMTEWLDENKQFEMEERDYACRLDLISKVRGWYKGEAYIKTIPESFRGELVYRTLLANHVATSNVRTAEAVFNKMKDLGFPLSTFTCNQMLILYKRVDKKKIADVLLLLEKENLKPNLNTYKILIDTKGSSNDITGMEQIVETMKSEGVELDLRARALIARHYASAGLKEKAEKVLKEMEGESLEENRHMCKDLLSVYGYLQREDEVRRVWKICEENPRYNEVLAAILAFGKIDKVKDAEAVFEKVLKMSHRVSSNVYSVLLRVYVDHKMVSEGKDLVKQMSDSGCNIGALTWDAVIKLYVEAGEVEKAESSLSKAIQSKQIKPLMSSFMYLMHEYVRRGDVHNTEKIFQRMKQAGYQSRFWAYQTLIQAYVNAKAPAYGMKERMKADNIFPNKRLAAQLAKADPFKKTPLSDLLD.

Residues methionine 1 to leucine 67 constitute a mitochondrion transit peptide. A compositionally biased stretch (low complexity) spans threonine 62–threonine 75. Residues threonine 62–glutamate 109 are disordered. Residues threonine 95 to glutamate 109 show a composition bias toward acidic residues. PPR repeat units lie at residues glycine 226–leucine 260, serine 261–proline 294, asparagine 295–leucine 329, aspartate 330–glutamate 364, serine 432–isoleucine 466, glycine 467–proline 502, and leucine 503–serine 537.

This sequence belongs to the PPR family. P subfamily.

The protein resides in the mitochondrion. The protein is Pentatricopeptide repeat-containing protein At1g15480, mitochondrial of Arabidopsis thaliana (Mouse-ear cress).